Reading from the N-terminus, the 81-residue chain is ATP synthase subunit c (81 aa).

2 helical membrane passes run 6–26 (AAASVIAAALAVGLGAIGPGI) and 57–77 (LAFMESLTIYGLVIALVLLFA).

It belongs to the ATPase C chain family. As to quaternary structure, F-type ATPases have 2 components, F(1) - the catalytic core - and F(0) - the membrane proton channel. F(1) has five subunits: alpha(3), beta(3), gamma(1), delta(1), epsilon(1). F(0) has four main subunits: a(1), b(1), b'(1) and c(10-14). The alpha and beta chains form an alternating ring which encloses part of the gamma chain. F(1) is attached to F(0) by a central stalk formed by the gamma and epsilon chains, while a peripheral stalk is formed by the delta, b and b' chains.

It localises to the cellular thylakoid membrane. Its function is as follows. F(1)F(0) ATP synthase produces ATP from ADP in the presence of a proton or sodium gradient. F-type ATPases consist of two structural domains, F(1) containing the extramembraneous catalytic core and F(0) containing the membrane proton channel, linked together by a central stalk and a peripheral stalk. During catalysis, ATP synthesis in the catalytic domain of F(1) is coupled via a rotary mechanism of the central stalk subunits to proton translocation. Key component of the F(0) channel; it plays a direct role in translocation across the membrane. A homomeric c-ring of between 10-14 subunits forms the central stalk rotor element with the F(1) delta and epsilon subunits. This is ATP synthase subunit c from Synechocystis sp. (strain ATCC 27184 / PCC 6803 / Kazusa).